Reading from the N-terminus, the 935-residue chain is Intimin (935 aa).

Positions 1 to 41 (MITHGFYARTRHKHKLKKTFIMLSAGLGLFFYVNQNSFANG) are cleaved as a signal peptide. The tract at residues 40 to 153 (NGENYFKLSS…KMTKMSPDAT (114 aa)) is peptidoglycan-binding. The interval 40 to 153 (NGENYFKLSS…KMTKMSPDAT (114 aa)) is sufficient for homodimerization. A required for periplasmic localization region spans residues 40–212 (NGENYFKLSS…LQAWLQHYGT (173 aa)). The region spanning 63 to 112 (LFYTLKTGETVSSISKSQGISLSVIWSLNKHLYSSESEMLKAAPGQQIIL) is the LysM domain. The interval 210–411 (YGTAEVNLQS…LYSMQFRYQF (202 aa)) is inverse autotransporter. Residues 402–411 (LYSMQFRYQF) form a signature sequence for beta-barrel assembly machinery (BAM), which recognizes the unfolded beta-barrel in the periplasm region. 2 Big-1 domains span residues 560–653 (VTDF…VIFV) and 660–754 (ITEI…VTFF). In terms of domain architecture, BIG2 spans 790–834 (GGNGTYSWHSENTNIATVDESGKVTLKGKGTAVINVTSGDKQTVS). A disulfide bridge links Cys-859 with Cys-933.

It belongs to the intimin/invasin family. Homodimer. Interacts with Tir.

It localises to the cell outer membrane. Functionally, an inverse autotransporter. Adhesin, which mediates attachment to the human intestine epithelial cells. Necessary for the production of attaching and effacing lesions on infected human tissue culture cells. Anchored to the outer membrane by binding to peptidoglycan (PGN) via its periplasmic domain, thus helping in receptor interactions during host invasion. PGN-binding may also aid in resisting mechanical and chemical stress during transit of the bacterium through the gastrointestinal tract of the host. The chain is Intimin (eae) from Escherichia coli O111:H-.